The primary structure comprises 21 residues: Outer membrane protein P2 (21 aa).

As to quaternary structure, disulfide bond interactions within and between MOMP molecules and other components form high molecular-weight oligomers.

The protein localises to the cell outer membrane. In terms of biological role, structural rigidity of the outer membrane of elementary bodies and porin forming, permitting diffusion of solutes through the intracellular reticulate body membrane. Binds carcinoembryonic antigen (CEA). In Glaesserella parasuis (Haemophilus parasuis), this protein is Outer membrane protein P2.